We begin with the raw amino-acid sequence, 239 residues long: Peptidyl-tRNA hydrolase (239 aa).

Tyr14 lines the tRNA pocket. His19 functions as the Proton acceptor in the catalytic mechanism. Phe64, Asn66, and Asn112 together coordinate tRNA. The tract at residues 186 to 239 (RTAPPRPSTGTGRPPAKTPARAEEPPAPAASPAPATAPLPDARSPLQKLVDRFK) is disordered. Residues 193-204 (STGTGRPPAKTP) show a composition bias toward low complexity. The segment covering 210-222 (PPAPAASPAPATA) has biased composition (pro residues).

The protein belongs to the PTH family. In terms of assembly, monomer.

Its subcellular location is the cytoplasm. The catalysed reaction is an N-acyl-L-alpha-aminoacyl-tRNA + H2O = an N-acyl-L-amino acid + a tRNA + H(+). Functionally, hydrolyzes ribosome-free peptidyl-tRNAs (with 1 or more amino acids incorporated), which drop off the ribosome during protein synthesis, or as a result of ribosome stalling. Catalyzes the release of premature peptidyl moieties from peptidyl-tRNA molecules trapped in stalled 50S ribosomal subunits, and thus maintains levels of free tRNAs and 50S ribosomes. This Ruegeria pomeroyi (strain ATCC 700808 / DSM 15171 / DSS-3) (Silicibacter pomeroyi) protein is Peptidyl-tRNA hydrolase.